Consider the following 139-residue polypeptide: Trafficking protein particle complex subunit 2-like protein (139 aa).

It belongs to the TRAPP small subunits family. Sedlin subfamily. As to quaternary structure, component of the multisubunit TRAPP (transport protein particle) complex, which includes at least TRAPPC2, TRAPPC2L, TRAPPC3, TRAPPC3L, TRAPPC4, TRAPPC5, TRAPPC8, TRAPPC9, TRAPPC10, TRAPPC11 and TRAPPC12. Interacts with the heterodimer TRAPPC3-TRAPPC6A.

The protein resides in the cytoplasm. It localises to the perinuclear region. It is found in the endoplasmic reticulum. Its subcellular location is the golgi apparatus. May play a role in vesicular transport from endoplasmic reticulum to Golgi. The chain is Trafficking protein particle complex subunit 2-like protein (Trappc2l) from Mus musculus (Mouse).